Consider the following 170-residue polypeptide: Photosystem I assembly protein Ycf3 (170 aa).

TPR repeat units lie at residues 35 to 68 (AFTY…EIDP), 72 to 105 (SYIL…NPFL), and 120 to 153 (GEQA…TPGN).

The protein belongs to the Ycf3 family.

The protein resides in the plastid. The protein localises to the chloroplast thylakoid membrane. Essential for the assembly of the photosystem I (PSI) complex. May act as a chaperone-like factor to guide the assembly of the PSI subunits. This chain is Photosystem I assembly protein Ycf3, found in Triticum aestivum (Wheat).